Consider the following 298-residue polypeptide: tRNA-uridine aminocarboxypropyltransferase 2 (298 aa).

Position 1 is an N-acetylmethionine (Met-1). The segment covering 1–10 (MEPQAEERTL) has biased composition (basic and acidic residues). The segment at 1–55 (MEPQAEERTLGEPAPPPSGALASPTPDEEERTEGGAPPTATPAGASGDSTSADGL) is disordered. Positions 34-45 (GGAPPTATPAGA) are enriched in low complexity. Position 132 is a phosphoserine (Ser-132). The short motif at 178–181 (DGTW) is the DXTW element.

Belongs to the TDD superfamily. DTWD2 family.

Its subcellular location is the nucleus. The protein resides in the cytoplasm. The enzyme catalyses a uridine in tRNA + S-adenosyl-L-methionine = a 3-[(3S)-3-amino-3-carboxypropyl]uridine in tRNA + S-methyl-5'-thioadenosine + H(+). Its function is as follows. Catalyzes the formation of 3-(3-amino-3-carboxypropyl)uridine (acp3U) at position 20a in the D-loop of several cytoplasmic tRNAs (acp3U(20a)). Also has a weak activity to form acp3U at position 20 in the D-loop of tRNAs (acp3U(20)). Involved in glycoRNA biosynthesis by mediating formation of acp3U, which acts as an attachment site for N-glycans on tRNAs. GlycoRNAs consist of RNAs modified with secretory N-glycans that are presented on the cell surface. This Mus musculus (Mouse) protein is tRNA-uridine aminocarboxypropyltransferase 2.